Consider the following 347-residue polypeptide: Holliday junction branch migration complex subunit RuvB (347 aa).

Positions 1–186 (MKDENSINFL…FGITARFELY (186 aa)) are large ATPase domain (RuvB-L). ATP-binding positions include L25, R26, G67, K70, T71, T72, 133-135 (EDY), R176, Y186, and R223. T71 is a Mg(2+) binding site. Residues 187–257 (SEIELVEIIK…IVAIGLEMLR (71 aa)) form a small ATPAse domain (RuvB-S) region. The segment at 260–347 (GEGLDEQDRN…NLNENQRVSF (88 aa)) is head domain (RuvB-H). The DNA site is built by R315 and R320.

This sequence belongs to the RuvB family. Homohexamer. Forms an RuvA(8)-RuvB(12)-Holliday junction (HJ) complex. HJ DNA is sandwiched between 2 RuvA tetramers; dsDNA enters through RuvA and exits via RuvB. An RuvB hexamer assembles on each DNA strand where it exits the tetramer. Each RuvB hexamer is contacted by two RuvA subunits (via domain III) on 2 adjacent RuvB subunits; this complex drives branch migration. In the full resolvosome a probable DNA-RuvA(4)-RuvB(12)-RuvC(2) complex forms which resolves the HJ.

The protein resides in the cytoplasm. It carries out the reaction ATP + H2O = ADP + phosphate + H(+). Its function is as follows. The RuvA-RuvB-RuvC complex processes Holliday junction (HJ) DNA during genetic recombination and DNA repair, while the RuvA-RuvB complex plays an important role in the rescue of blocked DNA replication forks via replication fork reversal (RFR). RuvA specifically binds to HJ cruciform DNA, conferring on it an open structure. The RuvB hexamer acts as an ATP-dependent pump, pulling dsDNA into and through the RuvAB complex. RuvB forms 2 homohexamers on either side of HJ DNA bound by 1 or 2 RuvA tetramers; 4 subunits per hexamer contact DNA at a time. Coordinated motions by a converter formed by DNA-disengaged RuvB subunits stimulates ATP hydrolysis and nucleotide exchange. Immobilization of the converter enables RuvB to convert the ATP-contained energy into a lever motion, pulling 2 nucleotides of DNA out of the RuvA tetramer per ATP hydrolyzed, thus driving DNA branch migration. The RuvB motors rotate together with the DNA substrate, which together with the progressing nucleotide cycle form the mechanistic basis for DNA recombination by continuous HJ branch migration. Branch migration allows RuvC to scan DNA until it finds its consensus sequence, where it cleaves and resolves cruciform DNA. The sequence is that of Holliday junction branch migration complex subunit RuvB from Borreliella afzelii (strain PKo) (Borrelia afzelii).